Consider the following 146-residue polypeptide: Hemoglobin subunit beta (146 aa).

Val1 is modified (N-acetylvaline). The region spanning 2–146 (HLTGEEKSAV…VATALAHKYH (145 aa)) is the Globin domain. Residue Thr12 is modified to Phosphothreonine. Ser44 is subject to Phosphoserine. His63 is a heme b binding site. An N6-acetyllysine modification is found at Lys82. His92 is a heme b binding site. Cys93 carries the post-translational modification S-nitrosocysteine. Residue Lys144 is modified to N6-acetyllysine.

It belongs to the globin family. Heterotetramer of two alpha chains and two beta chains. As to expression, red blood cells.

Involved in oxygen transport from the lung to the various peripheral tissues. The polypeptide is Hemoglobin subunit beta (HBB) (Tursiops truncatus (Atlantic bottle-nosed dolphin)).